Consider the following 372-residue polypeptide: MGANTFGKLLAVTTFGESHGPAIGCVIDGCPPGLELAAEEFAHDLQRRATGRSRHTSARREADEVEILSGVYEGRTTGTPIALLIRNTDQRSKDYATIARQFRPGHADYTYWQKYGIRDPRGGGRSSARETTMRVAAGVVAKKWLKQRYGVIVRGFLSQLGEIRPEGFAWDAVEDNPFFWPQAAQVPELEAYMDALRKSGNSVGARVDVVAEGVPPGWGEPIYGKLDGELAAALMSINAVKGVEIGAGFGSTVQKGTEHRDLMTPLGFLSNHAGGIIGGITTGQPIIVSIALKPTSSLRLPGETVDVDGHPVQVITKGRHDPCVGIRAPPIAEAMVALVLMDQALRHRAQCGDVGEMSPCILENVGFRNADD.

Positions 48 and 54 each coordinate NADP(+). FMN-binding positions include 125-127 (RSS), 238-239 (NA), Gly-278, 293-297 (KPTSS), and Arg-319.

The protein belongs to the chorismate synthase family. Homotetramer. It depends on FMNH2 as a cofactor.

It carries out the reaction 5-O-(1-carboxyvinyl)-3-phosphoshikimate = chorismate + phosphate. It functions in the pathway metabolic intermediate biosynthesis; chorismate biosynthesis; chorismate from D-erythrose 4-phosphate and phosphoenolpyruvate: step 7/7. In terms of biological role, catalyzes the anti-1,4-elimination of the C-3 phosphate and the C-6 proR hydrogen from 5-enolpyruvylshikimate-3-phosphate (EPSP) to yield chorismate, which is the branch point compound that serves as the starting substrate for the three terminal pathways of aromatic amino acid biosynthesis. This reaction introduces a second double bond into the aromatic ring system. In Xylella fastidiosa (strain 9a5c), this protein is Chorismate synthase.